We begin with the raw amino-acid sequence, 268 residues long: Orotidine 5'-phosphate decarboxylase (268 aa).

Substrate-binding positions include Asp37, 59 to 61, 91 to 100, Tyr217, and Arg235; these read KTH and DRKFADIGNT. The Proton donor role is filled by Lys93.

It belongs to the OMP decarboxylase family.

It carries out the reaction orotidine 5'-phosphate + H(+) = UMP + CO2. It functions in the pathway pyrimidine metabolism; UMP biosynthesis via de novo pathway; UMP from orotate: step 2/2. The chain is Orotidine 5'-phosphate decarboxylase (URA4) from Maudiozyma exigua (Yeast).